Consider the following 268-residue polypeptide: Small ribosomal subunit protein eS1 (268 aa).

Residues 1 to 21 are disordered; that stretch reads MAVGKNKGLSKGGKKGGKKKV.

This sequence belongs to the eukaryotic ribosomal protein eS1 family. Component of the small ribosomal subunit. Mature ribosomes consist of a small (40S) and a large (60S) subunit. The 40S subunit contains about 33 different proteins and 1 molecule of RNA (18S). The 60S subunit contains about 49 different proteins and 3 molecules of RNA (28S, 5.8S and 5S).

The protein localises to the cytoplasm. Its function is as follows. Essential for oogenesis; required for late follicle cell development. This is Small ribosomal subunit protein eS1 from Drosophila willistoni (Fruit fly).